A 184-amino-acid chain; its full sequence is GTPase RhebL1 (184 aa).

Residues 16–21 (SVGKTS), 32–38 (LEGYDPT), Gly63, 119–122 (NKAD), and 149–150 (SA) contribute to the GTP site. An Effector region motif is present at residues 35 to 43 (YDPTVENTY). Thr38 is a Mg(2+) binding site. Cysteine methyl ester is present on Cys181. Cys181 carries S-farnesyl cysteine lipidation. Residues 182–184 (YLM) constitute a propeptide, removed in mature form.

This sequence belongs to the small GTPase superfamily. Rheb family. As to quaternary structure, interacts with MTOR.

It is found in the endomembrane system. It localises to the cytoplasm. The catalysed reaction is GTP + H2O = GDP + phosphate + H(+). Functionally, binds GTP and exhibits intrinsic GTPase activity. May activate NF-kappa-B-mediated gene transcription. Promotes signal transduction through MTOR, activates RPS6KB1, and is a downstream target of the small GTPase-activating proteins TSC1 and TSC2. The protein is GTPase RhebL1 (Rhebl1) of Mus musculus (Mouse).